The chain runs to 220 residues: Probable transaldolase (220 aa).

Lys87 serves as the catalytic Schiff-base intermediate with substrate.

It belongs to the transaldolase family. Type 3B subfamily.

It is found in the cytoplasm. The enzyme catalyses D-sedoheptulose 7-phosphate + D-glyceraldehyde 3-phosphate = D-erythrose 4-phosphate + beta-D-fructose 6-phosphate. It participates in carbohydrate degradation; pentose phosphate pathway; D-glyceraldehyde 3-phosphate and beta-D-fructose 6-phosphate from D-ribose 5-phosphate and D-xylulose 5-phosphate (non-oxidative stage): step 2/3. Its function is as follows. Transaldolase is important for the balance of metabolites in the pentose-phosphate pathway. In Porphyromonas gingivalis (strain ATCC 33277 / DSM 20709 / CIP 103683 / JCM 12257 / NCTC 11834 / 2561), this protein is Probable transaldolase.